Reading from the N-terminus, the 371-residue chain is Cytochrome b (371 aa).

8 helical membrane passes run 25–45 (FGSM…FLAV), 69–90 (WMMQ…YIHI), 105–125 (WLSG…GXXX), 170–190 (XXXX…XXXX), 218–238 (YKDL…VSFL), 280–300 (LGGA…PFTH), 312–332 (IMQL…WAAT), and 339–358 (FTMI…IMNP). Positions 75 and 89 each coordinate heme b. Heme b-binding residues include residue 174 and residue 188.

Belongs to the cytochrome b family. As to quaternary structure, the cytochrome bc1 complex contains 3 respiratory subunits (MT-CYB, CYC1 and UQCRFS1), 2 core proteins (UQCRC1 and UQCRC2) and probably 6 low-molecular weight proteins. It depends on heme b as a cofactor.

It localises to the mitochondrion inner membrane. Its function is as follows. Component of the ubiquinol-cytochrome c reductase complex (complex III or cytochrome b-c1 complex) that is part of the mitochondrial respiratory chain. The b-c1 complex mediates electron transfer from ubiquinol to cytochrome c. Contributes to the generation of a proton gradient across the mitochondrial membrane that is then used for ATP synthesis. This Eryx tataricus (Tartar sand boa) protein is Cytochrome b (MT-CYB).